The following is a 586-amino-acid chain: Dual specificity tyrosine-phosphorylation-regulated kinase 3 (586 aa).

The segment covering methionine 1–alanine 13 has biased composition (basic and acidic residues). Residues methionine 1 to glycine 187 are disordered. A Protein kinase domain is found at tyrosine 208–isoleucine 521. ATP contacts are provided by residues isoleucine 214–valine 222, lysine 237, and phenylalanine 287–leucine 290. Aspartate 334 (proton acceptor) is an active-site residue. Position 368 is a phosphotyrosine (tyrosine 368). The Nuclear localization signal motif lies at arginine 467 to lysine 480.

It belongs to the protein kinase superfamily. CMGC Ser/Thr protein kinase family. MNB/DYRK subfamily. In terms of assembly, interacts with SIRT1. Requires Mg(2+) as cofactor. Post-translationally, protein kinase activity is activated following autophosphorylation at Tyr-368. Ubiquitinated at anaphase by the anaphase-promoting complex (APC/C), leading to its degradation by the proteasome. Expressed predominantly in testis. Expressed in late pachytene spermatocytes.

The protein localises to the nucleus. It localises to the cytoplasm. The protein resides in the nucleus speckle. Its subcellular location is the cytoplasmic granule. It is found in the cytoskeleton. The protein localises to the microtubule organizing center. It localises to the centrosome. The catalysed reaction is L-seryl-[protein] + ATP = O-phospho-L-seryl-[protein] + ADP + H(+). The enzyme catalyses L-threonyl-[protein] + ATP = O-phospho-L-threonyl-[protein] + ADP + H(+). It catalyses the reaction L-tyrosyl-[protein] + ATP = O-phospho-L-tyrosyl-[protein] + ADP + H(+). Its activity is regulated as follows. Protein kinase activity is activated following autophosphorylation at Tyr-368. In terms of biological role, dual-specificity protein kinase that promotes disassembly of several types of membraneless organelles during mitosis, such as stress granules, nuclear speckles and pericentriolar material. Dual-specificity tyrosine-regulated kinases (DYRKs) autophosphorylate a critical tyrosine residue in their activation loop and phosphorylate their substrate on serine and threonine residues. Acts as a central dissolvase of membraneless organelles during the G2-to-M transition, after the nuclear-envelope breakdown: acts by mediating phosphorylation of multiple serine and threonine residues in unstructured domains of proteins, such as SRRM1 and PCM1. Does not mediate disassembly of all membraneless organelles: disassembly of P-body and nucleolus is not regulated by DYRK3. Dissolution of membraneless organelles at the onset of mitosis is also required to release mitotic regulators, such as ZNF207, from liquid-unmixed organelles where they are sequestered and keep them dissolved during mitosis. Regulates mTORC1 by mediating the dissolution of stress granules: during stressful conditions, DYRK3 partitions from the cytosol to the stress granule, together with mTORC1 components, which prevents mTORC1 signaling. When stress signals are gone, the kinase activity of DYRK3 is required for the dissolution of stress granule and mTORC1 relocation to the cytosol: acts by mediating the phosphorylation of the mTORC1 inhibitor AKT1S1, allowing full reactivation of mTORC1 signaling. Also acts as a negative regulator of EPO-dependent erythropoiesis: may place an upper limit on red cell production during stress erythropoiesis. Inhibits cell death due to cytokine withdrawal in hematopoietic progenitor cells. Promotes cell survival upon genotoxic stress through phosphorylation of SIRT1: this in turn inhibits p53/TP53 activity and apoptosis. In Rattus norvegicus (Rat), this protein is Dual specificity tyrosine-phosphorylation-regulated kinase 3.